We begin with the raw amino-acid sequence, 1503 residues long: Translocase of chloroplast 159, chloroplastic (1503 aa).

Residues 1 to 24 show a composition bias toward polar residues; sequence MDSKSVTPEPTNPFYASSGQSGKT. Residues 1–210 form a disordered region; that stretch reads MDSKSVTPEP…GGKVDVDDKS (210 aa). The helical transmembrane segment at 21–37 threads the bilayer; that stretch reads SGKTYASVVAAAAAAAA. Phosphoserine is present on S71. Basic and acidic residues-rich tracts occupy residues 85-98 and 176-210; these read KVSD…KEDS and SESK…DDKS. Residues S210, S281, and S288 each carry the phosphoserine modification. Disordered regions lie at residues 298–338 and 429–464; these read KFTS…DVEK and VHNK…SEGD. The segment covering 447–456 has biased composition (basic and acidic residues); sequence ESDKATEEGG. S448, S461, S589, S609, S630, S632, and S665 each carry phosphoserine. The tract at residues 610 to 633 is disordered; sequence FGGKEVDQEPSGEGVTRVDGSESE. A coiled-coil region spans residues 781–804; it reads EEEKQKLEKLQSLRVKFLRLLQRL. An AIG1-type G domain is found at 853-1087; it reads IFSLNILVLG…RPQEPLDHRK (235 aa). Positions 862-869 are G1; that stretch reads GKAGVGKS. Residues 865–870 and 884–889 contribute to the GTP site; these read GVGKSA and DAFGLS. Position 869 (S869) interacts with Mg(2+). The tract at residues 884 to 887 is homodimerization; that stretch reads DAFG. Residues 889-893 are G2; the sequence is STTSV. Residues 909–912 are G3; sequence DTPG. Residues 947 to 952 form a homodimerization region; that stretch reads RLDTQT. Residues 981 to 984 are G4; it reads THAA. GTP contacts are provided by residues H982 and 1035–1036; that span reads EN. The segment at 1035–1037 is G5; it reads ENH. A coiled-coil region spans residues 1175 to 1203; the sequence is DYRVKLLQKKQWREELKRMKEMKKNGKKL. The interval 1203 to 1222 is disordered; it reads LGESEFGYPGEEDDPENGAP.

This sequence belongs to the TRAFAC class TrmE-Era-EngA-EngB-Septin-like GTPase superfamily. AIG1/Toc34/Toc159-like paraseptin GTPase family. TOC159 subfamily. As to quaternary structure, homodimer and heterodimer with TOC33. Part of the TOC core complex that includes 1 protein for the specific recognition of transit peptides surrounded by a ring composed of four proteins forming translocation channels, and four to five GTP-binding proteins providing energy. This core complex can interact with components of the TIC complex to form a larger import complex. Chloroplastic protein precursor such as prSS (precursor of the RuBisCO small subunit) interacts with these complexes. The TOC complex contains a specific subset of polar lipids such as digalactosyldiacylglyceride (DGDG), phosphatidylcholine (PC) and phosphatidylglycerol (PG). Interacts with SP1. Mg(2+) serves as cofactor. Post-translationally, phosphorylated by KOC1.

The protein resides in the plastid. It is found in the chloroplast outer membrane. It localises to the cytoplasm. In terms of biological role, GTPase involved in protein precursor import into chloroplasts. Seems to recognize chloroplast-destined precursor proteins and regulate their presentation to the translocation channel through GTP hydrolysis. Required for chloroplast biogenesis. Probably specialized in the import of nuclear encoded photosynthetic preproteins from the cytoplasm to the chloroplast. The chain is Translocase of chloroplast 159, chloroplastic from Arabidopsis thaliana (Mouse-ear cress).